Consider the following 947-residue polypeptide: Glutamate receptor 2.8 (947 aa).

The signal sequence occupies residues 1 to 26; that stretch reads MNPKKNNNTFLSYFVCLFLLLEVGLG. At 27–577 the chain is on the extracellular side; it reads QNQISEIKVG…NTWVFLKPWG (551 aa). Asparagine 42, asparagine 118, asparagine 333, asparagine 341, asparagine 348, asparagine 420, asparagine 478, and asparagine 524 each carry an N-linked (GlcNAc...) asparagine glycan. The helical transmembrane segment at 578-598 threads the bilayer; the sequence is LDLWVTTACFFVLIGFVVWLF. Residues 599–607 are Cytoplasmic-facing; sequence EHRVNTDFR. A helical transmembrane segment spans residues 608–628; that stretch reads GPPHHQIGTSFWFSFSTMVFA. Over 629-632 the chain is Cytoplasmic; the sequence is HREK. The helical transmembrane segment at 633-653 threads the bilayer; that stretch reads VVSNLARFVVVVWCFVVLVLT. Over 654–819 the chain is Extracellular; the sequence is QSYTANLTSF…NRLSLRSFWG (166 aa). N-linked (GlcNAc...) asparagine glycans are attached at residues asparagine 659, asparagine 704, asparagine 723, and asparagine 779. The chain crosses the membrane as a helical span at residues 820–840; sequence LFLIAGIASFLALLIFVFLFL. Over 841 to 947 the chain is Cytoplasmic; it reads YENRHTLCDD…ESDIECVVEQ (107 aa).

Belongs to the glutamate-gated ion channel (TC 1.A.10.1) family. As to quaternary structure, may form heteromers. As to expression, expressed predominantly in leaves.

Its subcellular location is the membrane. In terms of biological role, glutamate-gated receptor that probably acts as a non-selective cation channel. May be involved in light-signal transduction and calcium homeostasis via the regulation of calcium influx into cells. This is Glutamate receptor 2.8 (GLR2.8) from Arabidopsis thaliana (Mouse-ear cress).